Reading from the N-terminus, the 67-residue chain is MPKMKTKSAAKKRFKITGTGKVLSAAAGKRHGMIKRSNKFIRNARGTMVLAEPDGKKVIKNFLPNGL.

The protein belongs to the bacterial ribosomal protein bL35 family.

In Mesorhizobium japonicum (strain LMG 29417 / CECT 9101 / MAFF 303099) (Mesorhizobium loti (strain MAFF 303099)), this protein is Large ribosomal subunit protein bL35.